The primary structure comprises 416 residues: tRNA(Met) cytidine acetate ligase (416 aa).

ATP contacts are provided by residues Val-7–Leu-20, Gly-102, Asn-166, and Arg-191.

This sequence belongs to the TmcAL family.

Its subcellular location is the cytoplasm. The catalysed reaction is cytidine(34) in elongator tRNA(Met) + acetate + ATP = N(4)-acetylcytidine(34) in elongator tRNA(Met) + AMP + diphosphate. Catalyzes the formation of N(4)-acetylcytidine (ac(4)C) at the wobble position of elongator tRNA(Met), using acetate and ATP as substrates. First activates an acetate ion to form acetyladenylate (Ac-AMP) and then transfers the acetyl group to tRNA to form ac(4)C34. The sequence is that of tRNA(Met) cytidine acetate ligase from Syntrophomonas wolfei subsp. wolfei (strain DSM 2245B / Goettingen).